A 301-amino-acid chain; its full sequence is tRNA pseudouridine synthase B (301 aa).

Catalysis depends on Asp-38, which acts as the Nucleophile.

The protein belongs to the pseudouridine synthase TruB family. Type 1 subfamily.

The catalysed reaction is uridine(55) in tRNA = pseudouridine(55) in tRNA. In terms of biological role, responsible for synthesis of pseudouridine from uracil-55 in the psi GC loop of transfer RNAs. The protein is tRNA pseudouridine synthase B of Limosilactobacillus reuteri (strain DSM 20016) (Lactobacillus reuteri).